Here is a 213-residue protein sequence, read N- to C-terminus: Kynurenine formamidase (213 aa).

Residue Trp18 participates in substrate binding. Zn(2+) is bound by residues His48, His52, and Asp54. Catalysis depends on His58, which acts as the Proton donor/acceptor. Zn(2+) is bound by residues His160 and Glu172.

Belongs to the Cyclase 1 superfamily. KynB family. Homodimer. Requires Zn(2+) as cofactor.

The catalysed reaction is N-formyl-L-kynurenine + H2O = L-kynurenine + formate + H(+). It participates in amino-acid degradation; L-tryptophan degradation via kynurenine pathway; L-kynurenine from L-tryptophan: step 2/2. Catalyzes the hydrolysis of N-formyl-L-kynurenine to L-kynurenine, the second step in the kynurenine pathway of tryptophan degradation. The sequence is that of Kynurenine formamidase from Burkholderia cenocepacia (strain HI2424).